We begin with the raw amino-acid sequence, 2563 residues long: Compactin diketide synthase mlcB (2563 aa).

In terms of domain architecture, Ketosynthase family 3 (KS3) spans 29-450 (STPIAIVGMG…GSNAHVILES (422 aa)). Active-site for beta-ketoacyl synthase activity residues include Cys-202, His-337, and His-372. Positions 568–915 (VFTGQGAQWH…TELISKGYGL (348 aa)) are acyl and malonyl transferase. Ser-658 functions as the For malonyltransferase activity in the catalytic mechanism. Residues 951-960 (EPRGSRESKQ) show a composition bias toward basic and acidic residues. The disordered stretch occupies residues 951-971 (EPRGSRESKQRTHPPHTLIGS). Residues 966-1103 (HTLIGSRESL…GLIRSESERS (138 aa)) are N-terminal hotdog fold. One can recognise a PKS/mFAS DH domain in the interval 966–1284 (HTLIGSRESL…FQSVGSSFSD (319 aa)). The Proton acceptor; for dehydratase activity role is filled by His-998. The dehydratase-like stretch occupies residues 998 to 1010 (HVVGSSIIFPGAG). Residues 1121 to 1284 (DNRSIDPNDL…FQSVGSSFSD (164 aa)) are C-terminal hotdog fold. Catalysis depends on Asp-1187, which acts as the Proton donor; for dehydratase activity. The tract at residues 1542 to 1579 (YDVVVACQVLHATRCMKRTLSNVRKLLKPGGNLILVET) is methyltransferase. Positions 2485–2562 (EAISIVLKAM…GLVELVVAKC (78 aa)) constitute a Carrier domain. Ser-2522 carries the O-(pantetheine 4'-phosphoryl)serine modification.

Pantetheine 4'-phosphate serves as cofactor.

It carries out the reaction holo-[2-methylbutanoate polyketide synthase] + 2 malonyl-CoA + S-adenosyl-L-methionine + 2 NADPH + 3 H(+) = (S)-2-methylbutanoyl-[2-methylbutanoate polyketide synthase] + S-adenosyl-L-homocysteine + 2 CO2 + 2 NADP(+) + 2 CoA + H2O. It functions in the pathway polyketide biosynthesis. Functionally, diketide synthase; part of the gene cluster that mediates the biosynthesis of compactin, also known as mevastatin or ML-236B, and which acts as a potent competitive inhibitor of HMG-CoA reductase. Compactin biosynthesis is performed in two stages. The first stage is catalyzed by the nonaketide synthase mlcA, which belongs to type I polyketide synthases and catalyzes the iterative nine-step formation of the polyketide. This PKS stage is completed by the action of dehydrogenase mlcG, which catalyzes the NADPH-dependent reduction of the unsaturated tetra-, penta- and heptaketide intermediates that arise during the mlcA-mediated biosynthesis of the nonaketide chain and leads to dihydro-ML-236C carboxylate. Covalently bound dihydro-ML-236C carboxylate is released from mlcA by the mlcF esterase. Conversion of dihydro-ML-236C carboxylate into ML-236A carboxylate is subsequently performed with the participation of molecular oxygen and P450 monoogygenase mlcC. Finally, mlcH performs the conversion of ML-236A carboxylate to ML-236B/compactin carboxylate through the addition of the side-chain diketide moiety produced by the diketide synthase mlcB. This Penicillium citrinum protein is Compactin diketide synthase mlcB (mlcB).